The chain runs to 450 residues: Glutamyl-tRNA(Gln) amidotransferase subunit A, mitochondrial (450 aa).

Catalysis depends on charge relay system residues K47 and S122. The active-site Acyl-ester intermediate is S146.

This sequence belongs to the amidase family. GatA subfamily. Subunit of the heterotrimeric GatFAB amidotransferase (AdT) complex, composed of A, B and F subunits.

It is found in the mitochondrion. The catalysed reaction is L-glutamyl-tRNA(Gln) + L-glutamine + ATP + H2O = L-glutaminyl-tRNA(Gln) + L-glutamate + ADP + phosphate + H(+). In terms of biological role, allows the formation of correctly charged Gln-tRNA(Gln) through the transamidation of misacylated Glu-tRNA(Gln) in the mitochondria. The reaction takes place in the presence of glutamine and ATP through an activated gamma-phospho-Glu-tRNA(Gln). The protein is Glutamyl-tRNA(Gln) amidotransferase subunit A, mitochondrial of Candida albicans (strain SC5314 / ATCC MYA-2876) (Yeast).